Here is a 289-residue protein sequence, read N- to C-terminus: Iodotyrosine deiodinase 1 (289 aa).

Residues 1 to 21 traverse the membrane as a helical segment; it reads MYFLTPILVAILCILVVWIFK. Over residues 47–58 the composition is skewed to basic and acidic residues; that stretch reads DLKDSSDLHQAE. The segment at 47–69 is disordered; the sequence is DLKDSSDLHQAEEDADEWQESEE. Positions 59–69 are enriched in acidic residues; the sequence is EDADEWQESEE. FMN contacts are provided by residues 100–104, Ser-128, and 128–129; these read RRSVR and SG. The 3,5-diiodo-L-tyrosine site is built by Ala-130, Glu-157, Tyr-161, and Lys-182. 3-iodo-L-tyrosine-binding residues include Ala-130, Glu-157, Tyr-161, and Lys-182. Residues 237-239 and Arg-279 contribute to the FMN site; that span reads TTT.

This sequence belongs to the nitroreductase family. Homodimer. Requires FMN as cofactor.

The protein resides in the cell membrane. The protein localises to the cytoplasmic vesicle membrane. It catalyses the reaction 2 iodide + L-tyrosine + 2 NADP(+) = 3,5-diiodo-L-tyrosine + 2 NADPH + H(+). It carries out the reaction iodide + L-tyrosine + NADP(+) = 3-iodo-L-tyrosine + NADPH. The catalysed reaction is 3-iodo-L-tyrosine + iodide + NADP(+) = 3,5-diiodo-L-tyrosine + NADPH + H(+). The enzyme catalyses L-tyrosine + chloride + NADP(+) = 3-chloro-L-tyrosine + NADPH. It catalyses the reaction bromide + L-tyrosine + NADP(+) = 3-bromo-L-tyrosine + NADPH. In terms of biological role, catalyzes the dehalogenation of halotyrosines such as 3-bromo-L-tyrosine, 3-chloro-L-tyrosine, 3-iodo-L-tyrosine and 3,5-diiodo-L-tyrosine. During thyroid hormone biosynthesis, facilitates iodide salvage by catalysing the oxidative NADPH-dependent deiodination of the halogenated by-products of thyroid hormone production, monoiodotyrosine (L-MIT) and diiodotyrosine (L-DIT). The scavanged iodide can then reenter the hormone-producing pathways. Acts more efficiently on 3-iodo-L-tyrosine than 3,5-diiodo-L-tyrosine. The sequence is that of Iodotyrosine deiodinase 1 (IYD) from Pongo abelii (Sumatran orangutan).